Here is a 261-residue protein sequence, read N- to C-terminus: Ribosomal RNA small subunit methyltransferase J (261 aa).

S-adenosyl-L-methionine is bound by residues 109-110 (RD), 125-126 (ER), and aspartate 179.

Belongs to the methyltransferase superfamily. RsmJ family.

The protein localises to the cytoplasm. It catalyses the reaction guanosine(1516) in 16S rRNA + S-adenosyl-L-methionine = N(2)-methylguanosine(1516) in 16S rRNA + S-adenosyl-L-homocysteine + H(+). Its function is as follows. Specifically methylates the guanosine in position 1516 of 16S rRNA. This chain is Ribosomal RNA small subunit methyltransferase J, found in Pseudomonas aeruginosa (strain LESB58).